The chain runs to 275 residues: tRNA pseudouridine synthase A (275 aa).

Residue aspartate 56 is the Nucleophile of the active site. Tyrosine 110 serves as a coordination point for substrate.

It belongs to the tRNA pseudouridine synthase TruA family.

The catalysed reaction is uridine(38/39/40) in tRNA = pseudouridine(38/39/40) in tRNA. Functionally, formation of pseudouridine at positions 38, 39 and 40 in the anticodon stem and loop of transfer RNAs. The sequence is that of tRNA pseudouridine synthase A from Haloarcula marismortui (strain ATCC 43049 / DSM 3752 / JCM 8966 / VKM B-1809) (Halobacterium marismortui).